The sequence spans 341 residues: Glucokinase (341 aa).

18-23 (GDIGGT) contacts ATP.

The protein belongs to the bacterial glucokinase family.

It localises to the cytoplasm. It carries out the reaction D-glucose + ATP = D-glucose 6-phosphate + ADP + H(+). The sequence is that of Glucokinase from Rhizobium etli (strain ATCC 51251 / DSM 11541 / JCM 21823 / NBRC 15573 / CFN 42).